We begin with the raw amino-acid sequence, 135 residues long: Small ribosomal subunit protein uS8 (135 aa).

This sequence belongs to the universal ribosomal protein uS8 family. Part of the 30S ribosomal subunit. Contacts proteins S5 and S12.

Its function is as follows. One of the primary rRNA binding proteins, it binds directly to 16S rRNA central domain where it helps coordinate assembly of the platform of the 30S subunit. The sequence is that of Small ribosomal subunit protein uS8 from Cutibacterium acnes (strain DSM 16379 / KPA171202) (Propionibacterium acnes).